The chain runs to 390 residues: MEKLMKYASFFYTAVGIRPYTNGEESKMNKLIFHIVFWSNVINLSFVGLFESIYVYSAFMDNKFLEAVTALSYIGFVTVGMSKMFFIRWKKTAITELINELKEIYPNGLIREERYNLPMYLGTCSRISLIYSLLYSVLIWTFNLFCVMEYWVYDKWLNIRVVGKQLPYLMYIPWKWQDNWSYYPLLFSQNFAGYTSAAGQISTDVLLCAVATQLVMHFDFLSNSMERHELSGDWKKDSRFLVDIVRYHERILRLSDAVNDIFGIPLLLNFMVSSFVICFVGFQMTVGVPPDIVVKLFLFLVSSMSQVYLICHYGQLVADASYGFSVATYNQKWYKADVRYKRALVIIIARSQKVTFLKATIFLDITRSTMTDLLQISYKFFALLRTMYTQ.

Over 1 to 30 (MEKLMKYASFFYTAVGIRPYTNGEESKMNK) the chain is Cytoplasmic. The chain crosses the membrane as a helical span at residues 31–51 (LIFHIVFWSNVINLSFVGLFE). Topologically, residues 52–66 (SIYVYSAFMDNKFLE) are extracellular. A helical membrane pass occupies residues 67–87 (AVTALSYIGFVTVGMSKMFFI). The Cytoplasmic portion of the chain corresponds to 88 to 126 (RWKKTAITELINELKEIYPNGLIREERYNLPMYLGTCSR). The helical transmembrane segment at 127-147 (ISLIYSLLYSVLIWTFNLFCV) threads the bilayer. The Extracellular segment spans residues 148-200 (MEYWVYDKWLNIRVVGKQLPYLMYIPWKWQDNWSYYPLLFSQNFAGYTSAAGQ). Asn179 carries an N-linked (GlcNAc...) asparagine glycan. The helical transmembrane segment at 201–221 (ISTDVLLCAVATQLVMHFDFL) threads the bilayer. Residues 222-260 (SNSMERHELSGDWKKDSRFLVDIVRYHERILRLSDAVND) lie on the Cytoplasmic side of the membrane. Residues 261 to 281 (IFGIPLLLNFMVSSFVICFVG) traverse the membrane as a helical segment. The Extracellular portion of the chain corresponds to 282 to 291 (FQMTVGVPPD). A helical membrane pass occupies residues 292-312 (IVVKLFLFLVSSMSQVYLICH). Over 313 to 360 (YGQLVADASYGFSVATYNQKWYKADVRYKRALVIIIARSQKVTFLKAT) the chain is Cytoplasmic. A helical transmembrane segment spans residues 361–381 (IFLDITRSTMTDLLQISYKFF). Topologically, residues 382–390 (ALLRTMYTQ) are extracellular.

This sequence belongs to the insect chemoreceptor superfamily. Heteromeric odorant receptor channel (TC 1.A.69) family. Or49a subfamily. As to quaternary structure, interacts with Orco. Complexes exist early in the endomembrane system in olfactory sensory neurons (OSNs), coupling these complexes to the conserved ciliary trafficking pathway. As to expression, expressed in olfactory sensory neurons in the antenna.

The protein resides in the cell membrane. Odorant receptor which mediates acceptance or avoidance behavior, depending on its substrates. The odorant receptor repertoire encodes a large collection of odor stimuli that vary widely in identity, intensity, and duration. Forms a complex with Orco to form odorant-sensing units, providing sensitive and prolonged odorant signaling and calcium permeability. Involved in the behavioral responses to 2-heptanone, amyl acetate, and butyl acetate. This is Odorant receptor 85b (Or85b) from Drosophila melanogaster (Fruit fly).